Consider the following 199-residue polypeptide: MECVFGLVGNGFAIVAADTSAVHSILLHKNKEDKIMTLDSHKLVAASGEPGDRVQFTEYVQKNVSLYQFRNGIPLSTAAAANFTRGELATALRKNPYSVNILMAGYDKEAGASLYYIDYIATLHKVDKGAFGYGSYFSLSTMDRHYRSDMSVEEAIELVDKCILEIRSRLVIAPPNFVIKIVDKDGAREYGWRISTADA.

Position 1 is an N-acetylmethionine (M1).

This sequence belongs to the peptidase T1B family. As to quaternary structure, component of the 20S core complex of the 26S proteasome. The 26S proteasome is composed of a core protease (CP), known as the 20S proteasome, capped at one or both ends by the 19S regulatory particle (RP/PA700). The 20S proteasome core is composed of 28 subunits that are arranged in four stacked rings, resulting in a barrel-shaped structure. The two end rings are each formed by seven alpha subunits, and the two central rings are each formed by seven beta subunits. The catalytic chamber with the active sites is on the inside of the barrel. As to expression, ubiquitous low levels, higher expression in siliques and flowers.

The protein localises to the cytoplasm. It is found in the nucleus. Its function is as follows. Non-catalytic component of the proteasome, a multicatalytic proteinase complex which is characterized by its ability to cleave peptides with Arg, Phe, Tyr, Leu, and Glu adjacent to the leaving group at neutral or slightly basic pH. The proteasome has an ATP-dependent proteolytic activity. In Arabidopsis thaliana (Mouse-ear cress), this protein is Proteasome subunit beta type-2-B (PBD2).